Reading from the N-terminus, the 531-residue chain is Doublesex- and mab-3-related transcription factor A2 (531 aa).

Residues 69–116 (CARCRNHGVVSALKGHKRYCRWKDCLCAKCTLIAERQRVMAAQVALRR) constitute a DNA-binding region (DM). Positions 197–312 (LQAGRPDSPQ…GGPGPRQRTP (116 aa)) are disordered. The segment covering 274-285 (PGSSSPLGSESG) has biased composition (low complexity). The DMA domain occupies 310-345 (RTPLDILTRVFPGHRRGVLELVLQGCGGDVVQAIEQ).

The protein belongs to the DMRT family. As to expression, expressed in adult brain and testis, as well as in embryonic ovary, kidney, heart, lung, stomach and brain.

It localises to the nucleus. Functionally, may be involved in sexual development. The sequence is that of Doublesex- and mab-3-related transcription factor A2 (Dmrta2) from Mus musculus (Mouse).